The following is a 383-amino-acid chain: Putative type I specificity subunit S.MgeORF438P (383 aa).

Residues 1-142 (MTPKLKLNNN…KELEIPFTSN (142 aa)) are TRD1. The conserved region 1 stretch occupies residues 143–182 (KNEQHAIANTLSVFDERLENLASLIEINRKLRDEYAHKLF). The stretch at 143–182 (KNEQHAIANTLSVFDERLENLASLIEINRKLRDEYAHKLF) forms a coiled coil. Residues 183 to 330 (SLDEAFLSHW…GEIKVPYVKS (148 aa)) are TRD2. The conserved region 2 stretch occupies residues 331–370 (FQLQRKAGKIVFLLDQKLDQYKKELSSLTVIRDTLLKKLF). Residues 331–370 (FQLQRKAGKIVFLLDQKLDQYKKELSSLTVIRDTLLKKLF) adopt a coiled-coil conformation.

This sequence belongs to the type-I restriction system S methylase family.

In terms of biological role, the specificity (S) subunit of a type I restriction enzyme; this subunit dictates DNA sequence specificity. This bacterium does not encode the associated endonuclease or methylase subunits. The chain is Putative type I specificity subunit S.MgeORF438P from Mycoplasma genitalium (strain ATCC 33530 / DSM 19775 / NCTC 10195 / G37) (Mycoplasmoides genitalium).